Consider the following 262-residue polypeptide: Global transcriptional regulator CodY (262 aa).

Residues 1–159 are GAF domain; sequence MAHLLEKTRK…ASTVVGIQLL (159 aa). Positions 207–226 form a DNA-binding region, H-T-H motif; that stretch reads ASVIADRIGITRSVIVNALR.

The protein belongs to the CodY family.

Its subcellular location is the cytoplasm. Functionally, DNA-binding global transcriptional regulator which is involved in the adaptive response to starvation and acts by directly or indirectly controlling the expression of numerous genes in response to nutrient availability. During rapid exponential growth, CodY is highly active and represses genes whose products allow adaptation to nutrient depletion. This chain is Global transcriptional regulator CodY, found in Streptococcus pneumoniae serotype 4 (strain ATCC BAA-334 / TIGR4).